The following is a 256-amino-acid chain: MKIITCYKCVPDEQDIAINNADGTLDFSKADSKISQYDLNAIEAACQLKQQLGDAQVVAMSVGGKALTNAKGRKDVLSRGPDELIVVIDDQFEQALPQHTATALAAAAQKSGFDLLICGDGSSDLYAQQVGLLVGEALNIPAINGVSKILSLTDSTLTVERELEDEVETLSIPLPAVIAVSTDINTPQIPSMKAILGAAKKPVQVWSPADIGLNSVSAYSTQQVAAPKQRERQRVVIEGDGEEQIAAFVENLRKII.

Belongs to the ETF beta-subunit/FixA family. In terms of assembly, heterodimer of FixA and FixB.

It participates in amine and polyamine metabolism; carnitine metabolism. Functionally, required for anaerobic carnitine reduction. May bring reductant to CaiA. In Salmonella dublin (strain CT_02021853), this protein is Protein FixA.